The primary structure comprises 910 residues: NADH-quinone oxidoreductase subunit G (910 aa).

Positions 1–83 constitute a 2Fe-2S ferredoxin-type domain; the sequence is MAKIYVDGKA…GTIISINDDT (83 aa). [2Fe-2S] cluster is bound by residues Cys34, Cys45, Cys48, and Cys67. The 4Fe-4S His(Cys)3-ligated-type domain maps to 83-122; that stretch reads TSKKFRSNIVELLLTNHPHDCPVCEEGGNCHLQDMTVMTT. [4Fe-4S] cluster-binding residues include His99, Cys103, Cys106, Cys112, Cys151, Cys154, Cys157, Cys201, Cys228, Cys231, Cys235, and Cys263. Positions 221-277 constitute a 4Fe-4S Mo/W bis-MGD-type domain; that stretch reads MQYAPGICQNCSIGCNISIGERYGEIRRIENRYHESINHYLICDLGRFGYSHTNLKN.

It belongs to the complex I 75 kDa subunit family. As to quaternary structure, composed of 13 different subunits. Subunits NuoCD, E, F, and G constitute the peripheral sector of the complex. [2Fe-2S] cluster is required as a cofactor. Requires [4Fe-4S] cluster as cofactor.

It catalyses the reaction a quinone + NADH + 5 H(+)(in) = a quinol + NAD(+) + 4 H(+)(out). In terms of biological role, NDH-1 shuttles electrons from NADH, via FMN and iron-sulfur (Fe-S) centers, to quinones in the respiratory chain. Couples the redox reaction to proton translocation (for every two electrons transferred, four hydrogen ions are translocated across the cytoplasmic membrane), and thus conserves the redox energy in a proton gradient. This chain is NADH-quinone oxidoreductase subunit G (nuoG), found in Buchnera aphidicola subsp. Schizaphis graminum (strain Sg).